The sequence spans 209 residues: DIMLEAVQNAIATNEVNASMGIICATPTAGSAGTLPGILSVITKQLSLDRDAQIRFLFCASAFGMVVANDAMIAGATGGCQAEVGSASAMGAAAAVEAAGGTHQQSSEAFAMAMSNLLGLVCDPVAGLVEVPCVKRNVIGSVNALTSADMALAGLVSKIPADEVISAMKSIGENLPSTLRETGLGGLAATPTGIALKMQIFGQDMSIDK.

It belongs to the iron-sulfur dependent L-serine dehydratase family. Heterodimer of an alpha chain and a beta chain. Requires [4Fe-4S] cluster as cofactor.

It catalyses the reaction L-serine = pyruvate + NH4(+). It functions in the pathway carbohydrate biosynthesis; gluconeogenesis. In Latilactobacillus sakei (Lactobacillus sakei), this protein is Probable L-serine dehydratase, alpha chain (sdhA).